The following is a 396-amino-acid chain: Elongation factor Tu 1 (396 aa).

A tr-type G domain is found at 10–206; sequence KPHCNIGTIG…AVDAYIPQPE (197 aa). Positions 19 to 26 are G1; the sequence is GHVDHGKT. 19-26 contacts GTP; the sequence is GHVDHGKT. T26 lines the Mg(2+) pocket. Positions 60-64 are G2; the sequence is GITIS. Residues 81 to 84 are G3; the sequence is DCPG. GTP is bound by residues 81-85 and 136-139; these read DCPGH and NKCD. The G4 stretch occupies residues 136 to 139; that stretch reads NKCD. Positions 174 to 176 are G5; it reads SAL.

The protein belongs to the TRAFAC class translation factor GTPase superfamily. Classic translation factor GTPase family. EF-Tu/EF-1A subfamily. Monomer.

Its subcellular location is the cytoplasm. It catalyses the reaction GTP + H2O = GDP + phosphate + H(+). In terms of biological role, GTP hydrolase that promotes the GTP-dependent binding of aminoacyl-tRNA to the A-site of ribosomes during protein biosynthesis. The chain is Elongation factor Tu 1 from Rhodopseudomonas palustris (strain BisB5).